The primary structure comprises 389 residues: MAMSDRLDLVNPSEIRKLFDIAAGMKDVISLGIGEPDFDTPQHIKEYAKEALDMGLTHYGPNIGLPELREAIAEKLKKQNNIEADPNKEIMVLVGANQAFLMGLSAFLKDGEEVLIPTPAFVSYAPAVILAGGKPVEVPTYEENEFRLNVDELKKYVTEKTKALIINSPCNPTGSVLKKKDLEEIADFAVEHDLIVISDEVYEHFIYDDVKHYSIASLDGMFERTITVNGFSKTFAMTGWRLGFVAAPSWIIEKMVKFQMYNATCPVTFIQYAAAKALRDERSWKAVEEMRKEYDRRRKLVWKRLNEMGLPTVKPKGAFYIFPRIKDTGLTSKEFSELMLMEAKVAVVPGSAFGKAGEGYVRISYATAYEKLEEAMDRMEKVLREKKLT.

L-aspartate is bound by residues glycine 34 and asparagine 171. Lysine 233 carries the post-translational modification N6-(pyridoxal phosphate)lysine. Arginine 362 is a binding site for L-aspartate.

This sequence belongs to the class-I pyridoxal-phosphate-dependent aminotransferase family. As to quaternary structure, homodimer. Pyridoxal 5'-phosphate serves as cofactor.

It is found in the cytoplasm. It carries out the reaction L-aspartate + 2-oxoglutarate = oxaloacetate + L-glutamate. The sequence is that of Aspartate aminotransferase (aspC) from Pyrococcus abyssi (strain GE5 / Orsay).